Consider the following 801-residue polypeptide: N,N'-diacetylchitobiose phosphorylase (801 aa).

N-acetyl-alpha-D-glucosamine 1-phosphate-binding residues include Arg-333, Arg-343, Arg-349, Asp-350, Trp-490, and Asp-492. The active-site Proton donor is Asp-492. Asp-492, Lys-636, and Glu-637 together coordinate N-acetyl-D-glucosamine. N-acetyl-alpha-D-glucosamine 1-phosphate-binding residues include Glu-637, His-644, Gln-690, Thr-709, and Gly-710.

Belongs to the glycosyl hydrolase 94 family. As to quaternary structure, homodimer.

The catalysed reaction is N,N'-diacetylchitobiose + phosphate = N-acetyl-alpha-D-glucosamine 1-phosphate + N-acetyl-D-glucosamine. Its function is as follows. Catalyzes the reversible phosphorolysis of chitobiose (N,N'-diacetylchitobiose or (GlcNAc)(2)) into N-acetyl-alpha-D-glucosamine 1-phosphate (GlcNAc-1-P) and N-acetyl-D-glucosamine (GlcNAc) with inversion of the anomeric configuration. In the synthetic reaction, is also active on glucose-1-phosphate with 10% activity as compared with that on GlcNAc-1-P. GlcNAc is the best acceptor substrate, but the enzyme can use aryl-beta-glycosides of GlcNAc as the acceptor substrate with 10-20% activities of GlcNAc. Shows no phosphorolytic activity on cellobiose. The polypeptide is N,N'-diacetylchitobiose phosphorylase (Vibrio proteolyticus (Aeromonas proteolytica)).